The chain runs to 137 residues: Small ribosomal subunit protein bS6 (137 aa).

The segment at 113-137 (EEQREKKNFRKPFIKREEAATKENK) is disordered. Residues 126–137 (IKREEAATKENK) show a composition bias toward basic and acidic residues.

The protein belongs to the bacterial ribosomal protein bS6 family.

Its function is as follows. Binds together with bS18 to 16S ribosomal RNA. The chain is Small ribosomal subunit protein bS6 from Mycoplasma capricolum subsp. capricolum (strain California kid / ATCC 27343 / NCTC 10154).